The chain runs to 603 residues: Elongation factor 4 (603 aa).

The 183-residue stretch at 5-187 folds into the tr-type G domain; sequence RHIRNFCIIA…AVVNFVPPPK (183 aa). GTP contacts are provided by residues 17 to 22 and 134 to 137; these read DHGKST and NKID.

It belongs to the TRAFAC class translation factor GTPase superfamily. Classic translation factor GTPase family. LepA subfamily.

The protein localises to the cell membrane. It catalyses the reaction GTP + H2O = GDP + phosphate + H(+). Required for accurate and efficient protein synthesis under certain stress conditions. May act as a fidelity factor of the translation reaction, by catalyzing a one-codon backward translocation of tRNAs on improperly translocated ribosomes. Back-translocation proceeds from a post-translocation (POST) complex to a pre-translocation (PRE) complex, thus giving elongation factor G a second chance to translocate the tRNAs correctly. Binds to ribosomes in a GTP-dependent manner. The polypeptide is Elongation factor 4 (Symbiobacterium thermophilum (strain DSM 24528 / JCM 14929 / IAM 14863 / T)).